A 179-amino-acid polypeptide reads, in one-letter code: Large ribosomal subunit protein uL10 (179 aa).

A binds L7/L12 dimers region spans residues 137 to 179 (KEELYAMLVGRVKAPITGLVFALSGILRNLVYVLNAIKEKKSE).

In terms of assembly, part of the ribosomal stalk of the 50S ribosomal subunit. The N-terminus interacts with L11 and 23S rRNA to form the base of the stalk. The C-terminus forms an elongated spine to which 3 L12 dimers bind in a sequential fashion forming a heptameric L10(L12)2(L12)2(L12)2 complex.

Forms part of the ribosomal stalk, playing a central role in the interaction of the ribosome with GTP-bound translation factors (such as IF-2, EF-Tu, EF-G and RF3). This is Large ribosomal subunit protein uL10 (rplJ) from Thermotoga maritima (strain ATCC 43589 / DSM 3109 / JCM 10099 / NBRC 100826 / MSB8).